The chain runs to 364 residues: Alanine racemase (364 aa).

Catalysis depends on K35, which acts as the Proton acceptor; specific for D-alanine. K35 is subject to N6-(pyridoxal phosphate)lysine. Residue R131 participates in substrate binding. The Proton acceptor; specific for L-alanine role is filled by Y256. Residue M304 coordinates substrate.

Belongs to the alanine racemase family. Pyridoxal 5'-phosphate serves as cofactor.

The enzyme catalyses L-alanine = D-alanine. The protein operates within amino-acid biosynthesis; D-alanine biosynthesis; D-alanine from L-alanine: step 1/1. Its function is as follows. Catalyzes the interconversion of L-alanine and D-alanine. May also act on other amino acids. The polypeptide is Alanine racemase (alr) (Chromohalobacter salexigens (strain ATCC BAA-138 / DSM 3043 / CIP 106854 / NCIMB 13768 / 1H11)).